Consider the following 399-residue polypeptide: MSQYRTFTAQDAVEYARTFGGIDDPSTLVEAQEVGDGNLNLVFKIFDTTGVSRIVVKQALPYVRCVGESWPLTLDRARLEAQTLVAHYQHCPQHTVKIHHFDPELAVMVMEDLSDHNIWRGELIKGAWYPQAARQLGEYLAQTLFHTSDFYLHPHDKKAQVATFINPEMCEITEDLFFNDPYQIHERNSYPAEIEGDVAALRSDAQLKLAVAALKHRFFSHAEALLHGDIHSGSIFVADGRLKAIDAEFGYFGPIGFDVGTAIGNLLLNFCGLPGHLGIRDAAAAREQRLTDIQELWNTFAERFQVLATEKTRDAALRAPGYASEFLKKVWADAIGFCGTELIRRSVGLSHVADIDTIQDAEMRHECLRHAITLGKALIVIADRIESVEALIARVRQYS.

ATP-binding positions include Asn-40, Lys-57, and 111-113 (EDL). Asp-229 contributes to the substrate binding site. 246–248 (DAE) contacts ATP. Arg-344 provides a ligand contact to substrate.

It belongs to the methylthioribose kinase family. As to quaternary structure, homodimer.

It catalyses the reaction 5-(methylsulfanyl)-D-ribose + ATP = 5-(methylsulfanyl)-alpha-D-ribose 1-phosphate + ADP + H(+). It functions in the pathway amino-acid biosynthesis; L-methionine biosynthesis via salvage pathway; S-methyl-5-thio-alpha-D-ribose 1-phosphate from S-methyl-5'-thioadenosine (hydrolase route): step 2/2. Its function is as follows. Catalyzes the phosphorylation of methylthioribose into methylthioribose-1-phosphate. This is Methylthioribose kinase from Citrobacter koseri (strain ATCC BAA-895 / CDC 4225-83 / SGSC4696).